The primary structure comprises 201 residues: Sterile alpha motif domain-containing protein 12 (201 aa).

Residues 77-143 enclose the SAM domain; that stretch reads WTQQDVCKWL…LQQVLQLKVR (67 aa).

The sequence is that of Sterile alpha motif domain-containing protein 12 (SAMD12) from Pongo abelii (Sumatran orangutan).